Here is a 362-residue protein sequence, read N- to C-terminus: NAD(P)H-quinone oxidoreductase subunit 1, chloroplastic (362 aa).

8 helical membrane-spanning segments follow: residues 27-47, 103-123, 128-148, 164-184, 202-222, 247-267, 303-323, and 342-362; these read IWILPILALLLGITIEVLVIV, IAVISILLSFLVIPLGYHFVL, IGVFLWIAISSIAPIGLLMAG, AAQSISYEIPLTFCVLAISLL, FFGWNLWRQPIGFLVFLISSL, YSGIKYGLFYLVSYLNLLVSS, VIGIFITLTKAYLFLFISITI, and FLLPISLGNLLLTTSFQLVSL.

Belongs to the complex I subunit 1 family. In terms of assembly, NDH is composed of at least 16 different subunits, 5 of which are encoded in the nucleus.

It is found in the plastid. The protein localises to the chloroplast thylakoid membrane. It carries out the reaction a plastoquinone + NADH + (n+1) H(+)(in) = a plastoquinol + NAD(+) + n H(+)(out). It catalyses the reaction a plastoquinone + NADPH + (n+1) H(+)(in) = a plastoquinol + NADP(+) + n H(+)(out). In terms of biological role, NDH shuttles electrons from NAD(P)H:plastoquinone, via FMN and iron-sulfur (Fe-S) centers, to quinones in the photosynthetic chain and possibly in a chloroplast respiratory chain. The immediate electron acceptor for the enzyme in this species is believed to be plastoquinone. Couples the redox reaction to proton translocation, and thus conserves the redox energy in a proton gradient. The chain is NAD(P)H-quinone oxidoreductase subunit 1, chloroplastic from Saccharum hybrid (Sugarcane).